The following is a 476-amino-acid chain: Aspartyl/glutamyl-tRNA(Asn/Gln) amidotransferase subunit B (476 aa).

It belongs to the GatB/GatE family. GatB subfamily. Heterotrimer of A, B and C subunits.

It catalyses the reaction L-glutamyl-tRNA(Gln) + L-glutamine + ATP + H2O = L-glutaminyl-tRNA(Gln) + L-glutamate + ADP + phosphate + H(+). The catalysed reaction is L-aspartyl-tRNA(Asn) + L-glutamine + ATP + H2O = L-asparaginyl-tRNA(Asn) + L-glutamate + ADP + phosphate + 2 H(+). In terms of biological role, allows the formation of correctly charged Asn-tRNA(Asn) or Gln-tRNA(Gln) through the transamidation of misacylated Asp-tRNA(Asn) or Glu-tRNA(Gln) in organisms which lack either or both of asparaginyl-tRNA or glutaminyl-tRNA synthetases. The reaction takes place in the presence of glutamine and ATP through an activated phospho-Asp-tRNA(Asn) or phospho-Glu-tRNA(Gln). This Clostridium botulinum (strain Eklund 17B / Type B) protein is Aspartyl/glutamyl-tRNA(Asn/Gln) amidotransferase subunit B.